The chain runs to 24 residues: Large ribosomal subunit protein uL30 (24 aa).

The protein belongs to the universal ribosomal protein uL30 family. Part of the 50S ribosomal subunit.

In Ectopseudomonas mendocina (Pseudomonas mendocina), this protein is Large ribosomal subunit protein uL30 (rpmD).